Here is a 554-residue protein sequence, read N- to C-terminus: Sesquiterpene synthase 14a (554 aa).

The Mg(2+) site is built by Asp305, Asp309, Asp449, and Glu457. Positions 305–309 (DDLYD) match the DDXXD motif motif.

Belongs to the terpene synthase family. Tpsa subfamily. Mg(2+) serves as cofactor. Requires Mn(2+) as cofactor. In terms of tissue distribution, mostly expressed in stem trichomes.

It carries out the reaction (2E,6E)-farnesyl diphosphate = beta-bisabolene + diphosphate. The catalysed reaction is (2E,6E)-farnesyl diphosphate = (Z)-alpha-bisabolene + diphosphate. It catalyses the reaction (2E,6E)-farnesyl diphosphate = beta-acoradiene + diphosphate. The enzyme catalyses (2E,6E)-farnesyl diphosphate = (E)-gamma-bisabolene + diphosphate. It carries out the reaction (2E,6E)-farnesyl diphosphate = (E)-beta-farnesene + diphosphate. The catalysed reaction is (2E,6E)-farnesyl diphosphate = (Z)-beta-farnesene + diphosphate. It catalyses the reaction (2E)-geranyl diphosphate = limonene + diphosphate. The enzyme catalyses (2E)-geranyl diphosphate = beta-myrcene + diphosphate. Its pathway is secondary metabolite biosynthesis; terpenoid biosynthesis. Sesquiterpene synthase involved in the biosynthesis of volatile compounds. Mediates the conversion of (2E,6E)-farnesyl diphosphate ((EE)-FPP) into beta-bisabolene, beta-farnesene, (E)-gamma-bisabolene, beta-acoradiene, selinene and (Z)-alpha-bisabolene. Low or no activity with (2Z,6Z)-farnesyl diphosphate ((ZZ)-FPP). Can act with a low efficiency as a monoterpene synthase with geranyl diphosphate (GPP) as substrate, thus producing beta-myrcene and limonene. This is Sesquiterpene synthase 14a from Solanum habrochaites (Wild tomato).